We begin with the raw amino-acid sequence, 748 residues long: Rho GTPase-activating protein 24 (748 aa).

Positions 1 to 20 (MEENNDSTENPQQGQGRQNA) are disordered. Polar residues predominate over residues 7–18 (STENPQQGQGRQ). In terms of domain architecture, PH spans 19 to 125 (NAIKCGWLRK…WVKSIRRVIW (107 aa)). The Rho-GAP domain maps to 135–329 (QKLEDTVRYE…VMISKHDCLF (195 aa)). Disordered stretches follow at residues 354-476 (TMGQ…GTHS) and 582-641 (DFFG…SSNH). Composition is skewed to polar residues over residues 356 to 374 (GQLQNKENNNTKDSPSRQC) and 382 to 405 (PQRSSMNNGSPTALSGSKTNSPKN). A phosphoserine mark is found at Ser-369, Ser-391, Ser-396, Ser-398, Ser-402, Ser-413, Ser-415, and Ser-437. Residues 432–476 (IVTNGSFSSSNAEGLEKTQTTPNGSLQARRSSSLKVSGTKMGTHS) show a composition bias toward polar residues. Residue Thr-452 is modified to Phosphothreonine. Positions 600 to 615 (DLSHPRDYESKSDHRS) are enriched in basic and acidic residues. Over residues 617-641 (GGRSSRATSSSDNSETFVGNSSSNH) the composition is skewed to low complexity. Residues 649-729 (SSLKQEMTKQ…KEMEQFFSTF (81 aa)) adopt a coiled-coil conformation.

In terms of assembly, interacts with FLNA. Phosphorylated by ROCK, leading to activate the RacGAP activity. In terms of tissue distribution, isoform 1 is widely expressed with a higher level in kidney. Isoform 2 is mainly expressed in endothelial cells.

The protein localises to the cytoplasm. The protein resides in the cytoskeleton. It is found in the cell junction. Its subcellular location is the adherens junction. It localises to the focal adhesion. The protein localises to the cell projection. Functionally, rho GTPase-activating protein involved in cell polarity, cell morphology and cytoskeletal organization. Acts as a GTPase activator for the Rac-type GTPase by converting it to an inactive GDP-bound state. Controls actin remodeling by inactivating Rac downstream of Rho leading to suppress leading edge protrusion and promotes cell retraction to achieve cellular polarity. Able to suppress RAC1 and CDC42 activity in vitro. Overexpression induces cell rounding with partial or complete disruption of actin stress fibers and formation of membrane ruffles, lamellipodia, and filopodia. Isoform 2 is a vascular cell-specific GAP involved in modulation of angiogenesis. In Homo sapiens (Human), this protein is Rho GTPase-activating protein 24 (ARHGAP24).